Consider the following 333-residue polypeptide: Ribonucleoside-diphosphate reductase small chain B (333 aa).

Fe cation-binding residues include Asp-76, Glu-107, and His-110. Tyr-114 is a catalytic residue. Residues Glu-169, Glu-203, and His-206 each coordinate Fe cation.

It belongs to the ribonucleoside diphosphate reductase small chain family. In terms of assembly, heterodimer of a large and a small chain. Requires Fe cation as cofactor. As to expression, expressed in roots, rosette leaves, stems and flowers.

The protein localises to the cytoplasm. The enzyme catalyses a 2'-deoxyribonucleoside 5'-diphosphate + [thioredoxin]-disulfide + H2O = a ribonucleoside 5'-diphosphate + [thioredoxin]-dithiol. Its function is as follows. Provides the precursors necessary for DNA synthesis. Catalyzes the biosynthesis of deoxyribonucleotides from the corresponding ribonucleotides. The protein is Ribonucleoside-diphosphate reductase small chain B (RNR2B) of Arabidopsis thaliana (Mouse-ear cress).